A 345-amino-acid chain; its full sequence is S-adenosylmethionine:tRNA ribosyltransferase-isomerase (345 aa).

This sequence belongs to the QueA family. As to quaternary structure, monomer.

Its subcellular location is the cytoplasm. The enzyme catalyses 7-aminomethyl-7-carbaguanosine(34) in tRNA + S-adenosyl-L-methionine = epoxyqueuosine(34) in tRNA + adenine + L-methionine + 2 H(+). It functions in the pathway tRNA modification; tRNA-queuosine biosynthesis. Transfers and isomerizes the ribose moiety from AdoMet to the 7-aminomethyl group of 7-deazaguanine (preQ1-tRNA) to give epoxyqueuosine (oQ-tRNA). This chain is S-adenosylmethionine:tRNA ribosyltransferase-isomerase, found in Acinetobacter baumannii (strain ATCC 17978 / DSM 105126 / CIP 53.77 / LMG 1025 / NCDC KC755 / 5377).